The following is a 431-amino-acid chain: Nuclear receptor subfamily 1 group I member 2 (431 aa).

Positions 35–104 (LQICRVCGDK…RLRKCLESGM (70 aa)) form a DNA-binding region, nuclear receptor. 2 NR C4-type zinc fingers span residues 38–58 (CRVCGDKANGYHFNVMTCEGC) and 74–99 (CPFRKGTCEITRKTRRQCQACRLRKC). The Bipartite nuclear localization signal motif lies at 63–89 (RRAMKRNVRLRCPFRKGTCEITRKTRR). The hinge stretch occupies residues 105–142 (KKEMIMSDAAVEQRRALIKRKKREKIEAPPPGGQGLTE). An NR LBD domain is found at 143–430 (EQQALIQELM…LMQELFSSTD (288 aa)). Residues serine 244 and 282–285 (ILRF) each bind hyperforin.

The protein belongs to the nuclear hormone receptor family. NR1 subfamily. In terms of assembly, heterodimer with RXRA. Interacts with NCOA1. Interacts (via domain NR LBD) with CRY1 and CRY2 in a ligand-dependent manner.

It is found in the nucleus. In terms of biological role, nuclear receptor that binds and is activated by a variety of endogenous and xenobiotic compounds. Transcription factor that activates the transcription of multiple genes involved in the metabolism and secretion of potentially harmful xenobiotics, endogenous compounds and drugs. Response to specific ligands is species-specific, due to differences in the ligand-binding domain. Binds to a response element in the promoters of the CYP3A4 and ABCB1/MDR1 genes. Activated by naturally occurring steroids such as pregnenolone and progesterone, the cholesterol metabolite 5-beta-cholestane-3-alpha,7-alpha,12-alpha-triol, synthetic glucocorticoids and antiglucocorticoids and 16-alpha-carbonitrile (PCN). In Mus musculus (Mouse), this protein is Nuclear receptor subfamily 1 group I member 2 (Nr1i2).